Here is a 335-residue protein sequence, read N- to C-terminus: DNA-directed RNA polymerase subunit alpha (335 aa).

Residues 1-233 form an alpha N-terminal domain (alpha-NTD) region; sequence MVREKITVST…DLFIPFLHME (233 aa). The interval 265–335 is alpha C-terminal domain (alpha-CTD); it reads KEIALKSIFI…KQLVIFLPKK (71 aa).

It belongs to the RNA polymerase alpha chain family. In plastids the minimal PEP RNA polymerase catalytic core is composed of four subunits: alpha, beta, beta', and beta''. When a (nuclear-encoded) sigma factor is associated with the core the holoenzyme is formed, which can initiate transcription.

It localises to the plastid. Its subcellular location is the chloroplast. The catalysed reaction is RNA(n) + a ribonucleoside 5'-triphosphate = RNA(n+1) + diphosphate. Functionally, DNA-dependent RNA polymerase catalyzes the transcription of DNA into RNA using the four ribonucleoside triphosphates as substrates. The polypeptide is DNA-directed RNA polymerase subunit alpha (Coffea arabica (Arabian coffee)).